Consider the following 548-residue polypeptide: pH-responsive protein 1 (548 aa).

The N-terminal stretch at Met1–Ala20 is a signal peptide. An N-linked (GlcNAc...) asparagine glycan is attached at Asn41. Residues Cys82 and Cys111 are joined by a disulfide bond. Residues Asn173 and Asn261 are each glycosylated (N-linked (GlcNAc...) asparagine). Cystine bridges form between Cys224-Cys358, Cys242-Cys273, Cys381-Cys432, Cys390-Cys456, and Cys409-Cys414. A disordered region spans residues Gly483–Gly518. The GPI-anchor amidated serine moiety is linked to residue Ser517. The propeptide at Gly518–Phe548 is removed in mature form.

This sequence belongs to the glycosyl hydrolase 72 family.

Its subcellular location is the cell membrane. Required for apical cell growth and plays an essential role in morphogenesis. May be integral to the pathogenic ability of the organism. The sequence is that of pH-responsive protein 1 (PHR1) from Candida albicans (strain SC5314 / ATCC MYA-2876) (Yeast).